Here is a 707-residue protein sequence, read N- to C-terminus: Polyribonucleotide nucleotidyltransferase (707 aa).

2 residues coordinate Mg(2+): D486 and D492. One can recognise a KH domain in the interval 553–612 (PRIHIIKINPEKIKDVIGKGGSVIRMLTEETGTIIEIEDDGTVKISSTVKEKAKNAIRRI). One can recognise an S1 motif domain in the interval 622–690 (GRIYSGKVTR…RQGRLRLSIK (69 aa)).

It belongs to the polyribonucleotide nucleotidyltransferase family. Component of the RNA degradosome, which is a multiprotein complex involved in RNA processing and mRNA degradation. The cofactor is Mg(2+).

It is found in the cytoplasm. The catalysed reaction is RNA(n+1) + phosphate = RNA(n) + a ribonucleoside 5'-diphosphate. In terms of biological role, involved in mRNA degradation. Catalyzes the phosphorolysis of single-stranded polyribonucleotides processively in the 3'- to 5'-direction. The protein is Polyribonucleotide nucleotidyltransferase of Buchnera aphidicola subsp. Acyrthosiphon pisum (strain 5A).